The following is a 323-amino-acid chain: D-alanine--D-alanine ligase (323 aa).

Residues 121-317 form the ATP-grasp domain; it reads RIWFLTNNIN…FTNLIEEIIK (197 aa). 147–199 serves as a coordination point for ATP; it reads PMKRPYVIKPLAQGSSIGVEVIFAEDDFNFADYDFPYGDQVIIEQYIKGQGRE. Residues Glu270, Glu284, and Asn286 each coordinate Mg(2+).

This sequence belongs to the D-alanine--D-alanine ligase family. Mg(2+) serves as cofactor. It depends on Mn(2+) as a cofactor.

It is found in the cytoplasm. The enzyme catalyses 2 D-alanine + ATP = D-alanyl-D-alanine + ADP + phosphate + H(+). Its pathway is cell wall biogenesis; peptidoglycan biosynthesis. In terms of biological role, cell wall formation. The chain is D-alanine--D-alanine ligase from Rickettsia peacockii (strain Rustic).